The chain runs to 111 residues: Short neuropeptide F (111 aa).

An N-terminal signal peptide occupies residues 1–24 (MSAMYAKRCAALVLLVVTVGLVNA). Residues 25 to 76 (TENYMDYGEEMAEKTPAENIHELYRLLLQRNTLDNAGFGGIPLEHLMIRKSQ) constitute a propeptide that is removed on maturation. Phe-85 carries the phenylalanine amide modification. Positions 88-111 (SGPHVSARALPRPMGAVAGYDDNN) are excised as a propeptide.

As to expression, expressed throughout the central nervous system (at protein level).

The protein resides in the secreted. Its function is as follows. Plays a role in controlling food intake and regulating body size. The polypeptide is Short neuropeptide F (Camponotus floridanus (Florida carpenter ant)).